Here is a 493-residue protein sequence, read N- to C-terminus: Bifunctional protein GlmU (493 aa).

The interval 1-246 is pyrophosphorylase; the sequence is MTGELDVDGE…SWLVAGINDR (246 aa). UDP-N-acetyl-alpha-D-glucosamine-binding positions include 21-24, Lys35, Gln88, 93-94, 117-119, Gly156, Glu171, Asn186, and Asn244; these read LAAG, GT, and SGD. Asp119 is a binding site for Mg(2+). Asn244 is a binding site for Mg(2+). A linker region spans residues 247–267; the sequence is VQLTAAATELNARIIRRWQLA. An N-acetyltransferase region spans residues 268 to 493; sequence GVTIHDPRTT…DGPADDASDA (226 aa). UDP-N-acetyl-alpha-D-glucosamine is bound by residues Arg349 and Lys367. His379 functions as the Proton acceptor in the catalytic mechanism. Tyr382 and Asn393 together coordinate UDP-N-acetyl-alpha-D-glucosamine. Acetyl-CoA is bound by residues Ala396, 402–403, Ser421, and Ala439; that span reads NY. Positions 470 to 493 are disordered; sequence RPGTPEARAAVEAADGPADDASDA.

This sequence in the N-terminal section; belongs to the N-acetylglucosamine-1-phosphate uridyltransferase family. In the C-terminal section; belongs to the transferase hexapeptide repeat family. As to quaternary structure, homotrimer. It depends on Mg(2+) as a cofactor.

Its subcellular location is the cytoplasm. The enzyme catalyses alpha-D-glucosamine 1-phosphate + acetyl-CoA = N-acetyl-alpha-D-glucosamine 1-phosphate + CoA + H(+). It carries out the reaction N-acetyl-alpha-D-glucosamine 1-phosphate + UTP + H(+) = UDP-N-acetyl-alpha-D-glucosamine + diphosphate. The protein operates within nucleotide-sugar biosynthesis; UDP-N-acetyl-alpha-D-glucosamine biosynthesis; N-acetyl-alpha-D-glucosamine 1-phosphate from alpha-D-glucosamine 6-phosphate (route II): step 2/2. It functions in the pathway nucleotide-sugar biosynthesis; UDP-N-acetyl-alpha-D-glucosamine biosynthesis; UDP-N-acetyl-alpha-D-glucosamine from N-acetyl-alpha-D-glucosamine 1-phosphate: step 1/1. It participates in bacterial outer membrane biogenesis; LPS lipid A biosynthesis. Catalyzes the last two sequential reactions in the de novo biosynthetic pathway for UDP-N-acetylglucosamine (UDP-GlcNAc). The C-terminal domain catalyzes the transfer of acetyl group from acetyl coenzyme A to glucosamine-1-phosphate (GlcN-1-P) to produce N-acetylglucosamine-1-phosphate (GlcNAc-1-P), which is converted into UDP-GlcNAc by the transfer of uridine 5-monophosphate (from uridine 5-triphosphate), a reaction catalyzed by the N-terminal domain. In Clavibacter sepedonicus (Clavibacter michiganensis subsp. sepedonicus), this protein is Bifunctional protein GlmU.